The primary structure comprises 579 residues: MSALRPLLLLLLPLCPGPGPGPGSEAKVTRSCAETRQVLGARGYSLNLIPPALISGEHLRVCPQEYTCCSSETEQRLIRETEATFRGLVEDSGSFLVHTLAARHRKFDEFFLEMLSVAQHSLTQLFSHSYGRLYAQHALIFNGLFSRLRDFYGESGEGLDDTLADFWAQLLERVFPLLHPQYSFPPDYLLCLSRLASSTDGSLQPFGDSPRRLRLQITRTLVAARAFVQGLETGRNVVSEALKVPVSEGCSQALMRLIGCPLCRGVPSLMPCQGFCLNVVRGCLSSRGLEPDWGNYLDGLLILADKLQGPFSFELTAESIGVKISEGLMYLQENSAKVSAQVFQECGPPDPVPARNRRAPPPREEAGRLWSMVTEEERPTTAAGTNLHRLVWELRERLARMRGFWARLSLTVCGDSRMAADASLEAAPCWTGAGRGRYLPPVVGGSPAEQVNNPELKVDASGPDVPTRRRRLQLRAATARMKTAALGHDLDGQDADEDASGSGGGQQYADDWMAGAVAPPARPPRPPYPPRRDGSGGKGGGGSARYNQGRSRSGGASIGFHTQTILILSLSALALLGPR.

The signal sequence occupies residues 1–23 (MSALRPLLLLLLPLCPGPGPGPG). Residues Ser55, Ser92, and Ser155 are each glycosylated (O-linked (Xyl...) (heparan sulfate) serine). 2 disordered regions span residues 444–468 (GGSPAEQVNNPELKVDASGPDVPTR) and 485–555 (ALGH…RSGG). 2 O-linked (Xyl...) (heparan sulfate) serine glycosylation sites follow: Ser500 and Ser502. Over residues 520 to 529 (PARPPRPPYP) the composition is skewed to pro residues. Gly554 is lipidated: GPI-anchor amidated glycine. Residues 555-579 (GASIGFHTQTILILSLSALALLGPR) constitute a propeptide, removed in mature form.

This sequence belongs to the glypican family. Interacts (via heparan sulfate) with PTN; this interaction promotes neurite outgrowth through binding of PTN with chondroitin sulfate of proteoglycans, thereby releasing PTPRS of chondroitin sulfate proteoglycans (CSPGs) and leading to binding with heparan sulfate of GPC2. Interacts (heparan sulfate chain) with MDK; this interaction is inhibited by heparin followed by chondroitin sulfate E; this interaction induces GPC2 clustering through heparan sulfate chain; this interaction induces neuronal cell adhesion and neurite outgrowth.

It localises to the cell membrane. The protein resides in the secreted. It is found in the extracellular space. In terms of biological role, cell surface proteoglycan that bears heparan sulfate. May fulfill a function related to the motile behaviors of developing neurons. The protein is Glypican-2 (GPC2) of Homo sapiens (Human).